A 241-amino-acid polypeptide reads, in one-letter code: MNKDTIFSAPIEKLGDFTFDESVAEVFPDMIQRSVPGYSNIITAIGMLAQRFVTEGSQVYDLGCSRGAGILSIRRNLQTNQVKIIGVDNSQPMVERCRSHINAYHSEVPVEILCDDIRHIEIKNASMVVLNFTLQFLPRADRLELLTKIYQGLNPNGILVLSEKFTFENQVMNELLIDLHHTFKRANGYSELEVSQKRTALENVMLTDSIETHKDRLKQAGFSQIELWFQCFNFGSMIAVK.

Residues Tyr-38, 63–65 (GCS), 88–89 (DN), 116–117 (DI), Asn-131, and Arg-198 each bind S-adenosyl-L-methionine.

The protein belongs to the class I-like SAM-binding methyltransferase superfamily. Cx-SAM synthase family. In terms of assembly, homodimer.

It carries out the reaction prephenate + S-adenosyl-L-methionine = carboxy-S-adenosyl-L-methionine + 3-phenylpyruvate + H2O. Catalyzes the conversion of S-adenosyl-L-methionine (SAM) to carboxy-S-adenosyl-L-methionine (Cx-SAM). The protein is Carboxy-S-adenosyl-L-methionine synthase of Actinobacillus pleuropneumoniae serotype 5b (strain L20).